A 205-amino-acid polypeptide reads, in one-letter code: Urease accessory protein UreG (205 aa).

14 to 21 (GPVGSGKT) provides a ligand contact to GTP.

It belongs to the SIMIBI class G3E GTPase family. UreG subfamily. As to quaternary structure, homodimer. UreD, UreF and UreG form a complex that acts as a GTP-hydrolysis-dependent molecular chaperone, activating the urease apoprotein by helping to assemble the nickel containing metallocenter of UreC. The UreE protein probably delivers the nickel.

The protein resides in the cytoplasm. Facilitates the functional incorporation of the urease nickel metallocenter. This process requires GTP hydrolysis, probably effectuated by UreG. The protein is Urease accessory protein UreG of Escherichia coli O157:H7.